We begin with the raw amino-acid sequence, 232 residues long: Large ribosomal subunit protein uL16m (232 aa).

The transit peptide at 1–41 (MFPYLTRMNLSIKMGGLTLKESSPNAFLNNTTIARRFKHEY) directs the protein to the mitochondrion.

The protein belongs to the universal ribosomal protein uL16 family. As to quaternary structure, component of the mitochondrial large ribosomal subunit (mt-LSU). Mature yeast 74S mitochondrial ribosomes consist of a small (37S) and a large (54S) subunit. The 37S small subunit contains a 15S ribosomal RNA (15S mt-rRNA) and 34 different proteins. The 54S large subunit contains a 21S rRNA (21S mt-rRNA) and 46 different proteins.

Its subcellular location is the mitochondrion. Functionally, component of the mitochondrial ribosome (mitoribosome), a dedicated translation machinery responsible for the synthesis of mitochondrial genome-encoded proteins, including at least some of the essential transmembrane subunits of the mitochondrial respiratory chain. The mitoribosomes are attached to the mitochondrial inner membrane and translation products are cotranslationally integrated into the membrane. This chain is Large ribosomal subunit protein uL16m (MRPL16), found in Saccharomyces cerevisiae (strain ATCC 204508 / S288c) (Baker's yeast).